The sequence spans 638 residues: Ubiquitin-like-specific protease 2 (638 aa).

The segment covering 1 to 12 has biased composition (basic and acidic residues); it reads MRDSKDALDDKS. 2 disordered regions span residues 1 to 79 and 238 to 314; these read MRDS…PKHL and PQKT…TSND. Residues 238-249 show a composition bias toward polar residues; that stretch reads PQKTVRSIVKQT. Over residues 250-264 the composition is skewed to low complexity; the sequence is SSPHSSKMPKHSLPS. The span at 267–314 shows a compositional bias: polar residues; it reads TPFNSNSGDSLLSRIKNSNQSSSERPTANNGAQEQNQSSSSAGNTSND. Catalysis depends on residues H440 and D494. At T526 the chain carries Phosphothreonine. C544 is an active-site residue. A compositionally biased stretch (polar residues) spans 610-619; sequence NERQSLSSGS. The segment at 610 to 638 is disordered; it reads NERQSLSSGSNDEEDKENDDDLAILPITN. Positions 620-631 are enriched in acidic residues; it reads NDEEDKENDDDL.

The protein belongs to the peptidase C48 family.

The protein localises to the nucleus. The protein is Ubiquitin-like-specific protease 2 (ulp2) of Schizosaccharomyces pombe (strain 972 / ATCC 24843) (Fission yeast).